Here is a 283-residue protein sequence, read N- to C-terminus: Bifunctional protein FolD (283 aa).

NADP(+) is bound by residues 165 to 167 (GRS), Ser-190, and Val-231.

Belongs to the tetrahydrofolate dehydrogenase/cyclohydrolase family. Homodimer. Interacts with BrxC.

It carries out the reaction (6R)-5,10-methylene-5,6,7,8-tetrahydrofolate + NADP(+) = (6R)-5,10-methenyltetrahydrofolate + NADPH. The catalysed reaction is (6R)-5,10-methenyltetrahydrofolate + H2O = (6R)-10-formyltetrahydrofolate + H(+). Its pathway is one-carbon metabolism; tetrahydrofolate interconversion. Catalyzes the oxidation of 5,10-methylenetetrahydrofolate to 5,10-methenyltetrahydrofolate and then the hydrolysis of 5,10-methenyltetrahydrofolate to 10-formyltetrahydrofolate. The sequence is that of Bifunctional protein FolD from Bacillus subtilis (strain 168).